The primary structure comprises 54 residues: MLYYAVVFFVIAIIAAVLGFGGIAAGAAGIAKILFFVFLILALLSILSGAFRKK.

The next 2 helical transmembrane spans lie at 5–25 (AVVF…GIAA) and 27–47 (AAGI…LSIL).

It belongs to the UPF0391 family.

It is found in the cell membrane. The sequence is that of UPF0391 membrane protein Bpet1858 from Bordetella petrii (strain ATCC BAA-461 / DSM 12804 / CCUG 43448).